The following is an 801-amino-acid chain: Glycerol-3-phosphate acyltransferase 2, mitochondrial (801 aa).

The disordered stretch occupies residues 1 to 24 (MDTMLKSNPQTQQRSNHNGQETSL). Topologically, residues 1 to 305 (MDTMLKSNPQ…PGPRLSALGQ (305 aa)) are cytoplasmic. Positions 180–290 (QLHKGQMKMV…SGQPLLIFLE (111 aa)) are acyltransferase. An HXXXXD motif motif is present at residues 205–210 (HKSLLD). The chain crosses the membrane as a helical span at residues 306–332 (AWLGVVIQAVQAGIISDATLVPVAIAY). Residues 333 to 449 (DLVPDAPCNM…QLLVRRLSRH (117 aa)) are Mitochondrial intermembrane-facing. The chain crosses the membrane as a helical span at residues 450–472 (VLSASVASSAVMSTAIMATLLLL). The Cytoplasmic portion of the chain corresponds to 473-801 (KHQKGVVLSQ…EQFIRQFICS (329 aa)). S662 carries the phosphoserine modification. A Phosphothreonine modification is found at T666. Phosphoserine occurs at positions 668 and 670.

This sequence belongs to the GPAT/DAPAT family. As to quaternary structure, interacts with PIWIL2. In terms of tissue distribution, highly expressed in the testis. Expressed at lower levels in the heart, liver, kidney, spleen and adipose cells. Only detected in primary spermatocytes.

It is found in the mitochondrion outer membrane. The catalysed reaction is sn-glycerol 3-phosphate + an acyl-CoA = a 1-acyl-sn-glycero-3-phosphate + CoA. It catalyses the reaction a 1-acyl-sn-glycero-3-phosphate + an acyl-CoA = a 1,2-diacyl-sn-glycero-3-phosphate + CoA. The enzyme catalyses 1-(9Z-octadecenoyl)-sn-glycero-3-phosphate + (9Z)-octadecenoyl-CoA = 1,2-di-(9Z-octadecenoyl)-sn-glycero-3-phosphate + CoA. It carries out the reaction 1-(9Z-octadecenoyl)-sn-glycero-3-phosphate + (5Z,8Z,11Z,14Z)-eicosatetraenoyl-CoA = 1-(9Z)-octadecenoyl-2-(5Z,8Z,11Z,14Z)-eicosatetraenoyl-sn-glycero-3-phosphate + CoA. The catalysed reaction is (5Z,8Z,11Z,14Z)-eicosatetraenoyl-CoA + sn-glycerol 3-phosphate = 1-(5Z,8Z,11Z,14Z-eicosatetraenoyl)-sn-glycero-3-phosphate + CoA. The protein operates within phospholipid metabolism; CDP-diacylglycerol biosynthesis; CDP-diacylglycerol from sn-glycerol 3-phosphate: step 1/3. Inhibited by N-ethylmaleimide (NEM). Functionally, transfers an acyl-group from acyl-ACP to the sn-1 position of glycerol-3-phosphate producing a lysophosphatidic acid (LPA), an essential step for the triacylglycerol (TAG) and glycerophospholipids. In vitro also transfers an acyl-group from acyl-ACP to the LPA producing a phosphatidic acid (PA). Prefers arachidonoyl-CoA as the acyl donor. Required for primary processing step during piRNA biosynthesis. Molecular mechanisms by which it promotes piRNA biosynthesis are unclear and do not involve its acyltransferase activity. This is Glycerol-3-phosphate acyltransferase 2, mitochondrial from Mus musculus (Mouse).